The chain runs to 368 residues: 3-dehydroquinate synthase (368 aa).

NAD(+)-binding positions include 69 to 74 (DGEAYK), 103 to 107 (GVIGD), 127 to 128 (TT), lysine 140, and lysine 149. The Zn(2+) site is built by glutamate 182, histidine 245, and histidine 262.

It belongs to the sugar phosphate cyclases superfamily. Dehydroquinate synthase family. Requires Co(2+) as cofactor. The cofactor is Zn(2+). NAD(+) serves as cofactor.

It localises to the cytoplasm. It carries out the reaction 7-phospho-2-dehydro-3-deoxy-D-arabino-heptonate = 3-dehydroquinate + phosphate. The protein operates within metabolic intermediate biosynthesis; chorismate biosynthesis; chorismate from D-erythrose 4-phosphate and phosphoenolpyruvate: step 2/7. In terms of biological role, catalyzes the conversion of 3-deoxy-D-arabino-heptulosonate 7-phosphate (DAHP) to dehydroquinate (DHQ). This is 3-dehydroquinate synthase from Pseudomonas aeruginosa (strain LESB58).